Here is a 305-residue protein sequence, read N- to C-terminus: Porphobilinogen deaminase (305 aa).

At cysteine 243 the chain carries S-(dipyrrolylmethanemethyl)cysteine.

This sequence belongs to the HMBS family. In terms of assembly, monomer. Requires dipyrromethane as cofactor.

The catalysed reaction is 4 porphobilinogen + H2O = hydroxymethylbilane + 4 NH4(+). The protein operates within porphyrin-containing compound metabolism; protoporphyrin-IX biosynthesis; coproporphyrinogen-III from 5-aminolevulinate: step 2/4. In terms of biological role, tetrapolymerization of the monopyrrole PBG into the hydroxymethylbilane pre-uroporphyrinogen in several discrete steps. The chain is Porphobilinogen deaminase from Limosilactobacillus reuteri (strain DSM 20016) (Lactobacillus reuteri).